A 105-amino-acid polypeptide reads, in one-letter code: TPR repeat-containing protein PA0015 (105 aa).

TPR repeat units follow at residues 17 to 50 and 52 to 84; these read ALLRFGLGKGYLDAGDAERAAEHLQRCVEQDPKY and AGWKLLGKARQAAGDLAGARQAWEQGLATAATH.

This chain is TPR repeat-containing protein PA0015, found in Pseudomonas aeruginosa (strain ATCC 15692 / DSM 22644 / CIP 104116 / JCM 14847 / LMG 12228 / 1C / PRS 101 / PAO1).